Here is a 439-residue protein sequence, read N- to C-terminus: MSSPKVGFVSLGRPKALVDSERILTQLRTEGYEVTPEYNDADVVVVNTCGFIDSAKAESLEAIGEAIAENGKVIVTGCMGVEESVIRQVHPSVLAVTGPQQYEEVVRAVHGVAPPRQDHNPYLDLVPPQGVKLTPRHYAYLKISEGCNHRCSFCIIPSMRGDLVSRPVGDVLSEAERLVRAGVKELLVISQDTSAYGVDIKYRSGFWNGRPVKTRMTELCAALSELGVWTRLHYVYPYPHVDEVIGLMADGKVLPYLDIPFQHASPRILRAMKRPAFEDKTLARIKRWREECPDLTLRSTFIVGFPGETEEDFQYLLDWMSEAQLDRVGCFQYSPVEGAPANTLDNPVPDEVKQERWERFMEHQQAISTARLSTRVGREIDVLIDSVDEEGAVGRSSADAPEIDGCVYVDSEQPLKAGDMVRVRVTDSDEYDLWGERIA.

The MTTase N-terminal domain maps to 4 to 114; it reads PKVGFVSLGR…VVRAVHGVAP (111 aa). One can recognise a Radical SAM core domain in the interval 133–370; sequence LTPRHYAYLK…MEHQQAISTA (238 aa). [4Fe-4S] cluster contacts are provided by Cys-147, Cys-151, and Cys-154. In terms of domain architecture, TRAM spans 373–439; it reads STRVGREIDV…EYDLWGERIA (67 aa).

Belongs to the methylthiotransferase family. RimO subfamily. [4Fe-4S] cluster serves as cofactor.

The protein localises to the cytoplasm. The catalysed reaction is L-aspartate(89)-[ribosomal protein uS12]-hydrogen + (sulfur carrier)-SH + AH2 + 2 S-adenosyl-L-methionine = 3-methylsulfanyl-L-aspartate(89)-[ribosomal protein uS12]-hydrogen + (sulfur carrier)-H + 5'-deoxyadenosine + L-methionine + A + S-adenosyl-L-homocysteine + 2 H(+). Catalyzes the methylthiolation of an aspartic acid residue of ribosomal protein uS12. This is Ribosomal protein uS12 methylthiotransferase RimO from Bordetella bronchiseptica (strain ATCC BAA-588 / NCTC 13252 / RB50) (Alcaligenes bronchisepticus).